We begin with the raw amino-acid sequence, 226 residues long: Survival motor neuron protein (226 aa).

The span at Ala35–Glu44 shows a compositional bias: basic and acidic residues. The disordered stretch occupies residues Ala35 to Val68. One can recognise a Tudor domain in the interval Ser69–Arg128. Residues Asp137–Pro172 form a disordered region. Positions Lys154–Arg163 are enriched in basic residues. Residues Ser159–Lys226 form a required for homodimerization region.

The protein belongs to the SMN family. In terms of assembly, homodimer (via C-terminal region). Component of the core survival motor neuron (SMN) complex composed of Smn, Gem2, Gem3, rig/Gem5 and one of 3 almost identical Gem4 paralogs encoded by Glos/Gem4a, Gem4b or Gem4c. Interacts with Gem3 (via C-terminus); the interaction is direct and stabilizes Smn. Part of a minimal SMN complex composed of Smn and Gem2 only; this complex is active in UsnRNP assembly. The SMN complex associates with the entire set of spliceosomal snRNP Sm proteins, SmB, SmD1, SmD2, SmD3, SmE, SmF and SmG, and with the snRNP-specific proteins snRNP-U1-70K, U2A, snf/U1A and U5-116KD. Interacts with Glos/Gem4a; the interaction is probably indirect. Interacts with Sbat and Vlet; Sbat and Vlet, along with Hez, may form an accessory subcomplex involved in SMN complex function. Interacts weakly with Gem3. Interacts with SmB and SmD1; the interaction is favored by methylation of the Sm proteins. Interacts with Actn; the interaction occurs in thoracic tissues and in adult flies. Interacts with Rpp20. Interacts with msk and Snup; these interactions are RNA-dependent. In late first instar larvae, expressed in pNBs. Expression increases as the pNBs enlarge, with the highest accumulation observed in dividing pNBs of second and third instar larvae. Enriched in type ID (thoracic and brain lobe), type IA and all the mira-expressing NBs of the brain lobes. In larvae, also expressed in muscle fibers. In larval and adult testis, expressed in germline stem cells and gonialblast, expression decreases as cells differentiate into cysts and spermatocytes. In adult fly thorax, expressed in the IFMs. In adult ovary, expressed in germline stem cells, cystoblasts, follicle cells, nurse cells and oocyte (at protein level). Also expressed in larval salivary glands.

It localises to the cytoplasm. The protein resides in the nucleus. The protein localises to the U-body. It is found in the gem. Its subcellular location is the cajal body. It localises to the myofibril. The protein resides in the sarcomere. The protein localises to the i band. It is found in the z line. In terms of biological role, core component of the survival motor neuron (SMN) complex that plays an essential role in spliceosomal small nuclear ribonucleoprotein (snRNP) assembly in the cytoplasm, is required for pre-mRNA splicing in the nucleus and acts as a chaperone that discriminates target and non-target RNAs of Sm proteins. A major component of nuclear bodies known as gems (gemini of Cajal bodies) thought to be storage depots of excess SMN complexes. Required for normal expression of spliceosomal snRNAs and for U12 intron splicing. Required in cholinergic neurons, but not in motor neurons, to ensure correct splicing and proper levels of stas mRNA and normal neurotransmitter release by motor neurons. However, Smn is required in motor neurons, but not in cholinergic neurons, for normal motor behavior but plays no role in synaptic transmission according to a report. In both muscle and neurons, required for the formation of a normal neuromuscular junction (NMJ) structure. Plays a neuron-specific role in long-term homeostatic compensation at the larval NMJ. In the thorax of adult flies, required for Act88F, an indirect flight muscle (IFM)-specific actin, expression and for proper IFM myofibril formation. In nurse cells, oocytes and follicle cells, required to maintain normal organization of nuclear compartments including chromosomes, nucleoli, Cajal bodies, histone locus bodies and heterochromatin. Required for the functional integrity of the cytoplasmic U snRNP body (U body) and P body. Required in dividing postembryonic neuroblasts (pNBs) for the correct basal localization of mira. The tight regulation of its expression is critical for stem cell division, proliferation and differentiation in male germline and developing central nervous system (CNS). Required for tracheal terminal cell lumen formation. This chain is Survival motor neuron protein, found in Drosophila melanogaster (Fruit fly).